The chain runs to 207 residues: MAEYTLPDLDWDYEALEPHISGQINEIHHTKHHATYVKGVNDALAKLEEARANEDHAAIFLNEKNLAFHLGGHVNHSLWWKNLSPDGGDKPTGELAAAIDDAFGSFDKFRAQFSAAANGLQGSGWAVLGYDTLGSRLLTFQLYDQQANVPLGIIPLLQVDMWEHAFYLQYKNVKADYVKAFWNVVNWADVQKRYTAATSKTQGLIFG.

The Mn(2+) site is built by histidine 28, histidine 76, aspartate 160, and histidine 164.

This sequence belongs to the iron/manganese superoxide dismutase family. The cofactor is Mn(2+).

The enzyme catalyses 2 superoxide + 2 H(+) = H2O2 + O2. Its function is as follows. Destroys superoxide anion radicals which are normally produced within the cells and which are toxic to biological systems. The chain is Superoxide dismutase [Mn] (sodA) from Mycobacterium lepraemurium.